The sequence spans 315 residues: MATTVAATKLTSLKAVKKLGFREIRQVRQWTPLQSSMPHFGSRQSFATSTVVKAQATAVEQSTGEAVPKVESPVVVVTGASRGIGKAIALSLGKAGCKVLVNYARSAKEAEEVSKQIEAYGGQAITFGGDVSKEADVEAMMKTAIDAWGTIDVVVNNAGITRDTLLIRMKKSQWDEVIDLNLTGVFLCTQAATKIMMKKRKGRIINIASVVGLIGNIGQANYAAAKAGVIGFSKTAAREGASRNINVNVVCPGFIASDMTAKLGEDMEKKILGTIPLGRYGQPEDVAGLVEFLALSPAASYITGQAFTIDGGIAI.

A chloroplast-targeting transit peptide spans 1 to 55 (MATTVAATKLTSLKAVKKLGFREIRQVRQWTPLQSSMPHFGSRQSFATSTVVKAQ). 77–101 (VTGASRGIGKAIALSLGKAGCKVLV) lines the NADP(+) pocket. Ser-209 contacts substrate. Tyr-222 serves as the catalytic Proton acceptor.

The protein belongs to the short-chain dehydrogenases/reductases (SDR) family. In terms of assembly, homotetramer.

Its subcellular location is the plastid. The protein localises to the chloroplast. It carries out the reaction a (3R)-hydroxyacyl-[ACP] + NADP(+) = a 3-oxoacyl-[ACP] + NADPH + H(+). It participates in lipid metabolism; fatty acid biosynthesis. This chain is 3-oxoacyl-[acyl-carrier-protein] reductase 3, chloroplastic (bkr3), found in Brassica napus (Rape).